The sequence spans 328 residues: Probable E3 ubiquitin-protein ligase RHC1A (328 aa).

N-acetylserine is present on S2. Residues 190–231 form an RING-type; atypical zinc finger; it reads CPVCKDEFELGSEAKQMPCNHIYHSDCIVPWLVQHNSCPVCR. A disordered region spans residues 233-324; it reads ELPSASGPSS…QQSYMGYSGW (92 aa). The span at 238–250 shows a compositional bias: polar residues; that stretch reads SGPSSSQNRTTPT. 2 stretches are compositionally biased toward low complexity: residues 251-266 and 275-290; these read RNYR…NSRE and FSSF…SSSS. Residues 291–300 are compositionally biased toward polar residues; it reads TQNRGGTRNS.

It carries out the reaction S-ubiquitinyl-[E2 ubiquitin-conjugating enzyme]-L-cysteine + [acceptor protein]-L-lysine = [E2 ubiquitin-conjugating enzyme]-L-cysteine + N(6)-ubiquitinyl-[acceptor protein]-L-lysine.. Its pathway is protein modification; protein ubiquitination. Functionally, probable E3 ubiquitin-protein ligase that may possess E3 ubiquitin ligase activity in vitro. This Arabidopsis thaliana (Mouse-ear cress) protein is Probable E3 ubiquitin-protein ligase RHC1A.